A 204-amino-acid chain; its full sequence is Holliday junction branch migration complex subunit RuvA (204 aa).

A domain I region spans residues 1–64; that stretch reads MIGKLKGTID…EDQLKLFGFM (64 aa). Residues 65 to 143 are domain II; sequence TALEREWFNL…AFAGEAINIG (79 aa). A flexible linker region spans residues 144–151; it reads LKQELGEG. Residues 152–204 are domain III; the sequence is VAAAPVADAVSALTNLGYSRDQAANAIAAAMKTAGEGADSAKLIRLGLKELAR.

It belongs to the RuvA family. In terms of assembly, homotetramer. Forms an RuvA(8)-RuvB(12)-Holliday junction (HJ) complex. HJ DNA is sandwiched between 2 RuvA tetramers; dsDNA enters through RuvA and exits via RuvB. An RuvB hexamer assembles on each DNA strand where it exits the tetramer. Each RuvB hexamer is contacted by two RuvA subunits (via domain III) on 2 adjacent RuvB subunits; this complex drives branch migration. In the full resolvosome a probable DNA-RuvA(4)-RuvB(12)-RuvC(2) complex forms which resolves the HJ.

The protein localises to the cytoplasm. Its function is as follows. The RuvA-RuvB-RuvC complex processes Holliday junction (HJ) DNA during genetic recombination and DNA repair, while the RuvA-RuvB complex plays an important role in the rescue of blocked DNA replication forks via replication fork reversal (RFR). RuvA specifically binds to HJ cruciform DNA, conferring on it an open structure. The RuvB hexamer acts as an ATP-dependent pump, pulling dsDNA into and through the RuvAB complex. HJ branch migration allows RuvC to scan DNA until it finds its consensus sequence, where it cleaves and resolves the cruciform DNA. The chain is Holliday junction branch migration complex subunit RuvA from Rhizobium johnstonii (strain DSM 114642 / LMG 32736 / 3841) (Rhizobium leguminosarum bv. viciae).